Consider the following 178-residue polypeptide: ATP-dependent protease subunit HslV (178 aa).

Residue Thr-7 is part of the active site. Residues Gly-162, Cys-165, and Thr-168 each coordinate Na(+).

This sequence belongs to the peptidase T1B family. HslV subfamily. As to quaternary structure, a double ring-shaped homohexamer of HslV is capped on each side by a ring-shaped HslU homohexamer. The assembly of the HslU/HslV complex is dependent on binding of ATP.

Its subcellular location is the cytoplasm. It catalyses the reaction ATP-dependent cleavage of peptide bonds with broad specificity.. With respect to regulation, allosterically activated by HslU binding. Its function is as follows. Protease subunit of a proteasome-like degradation complex believed to be a general protein degrading machinery. The protein is ATP-dependent protease subunit HslV of Paraburkholderia xenovorans (strain LB400).